Consider the following 147-residue polypeptide: Cyanate hydratase (147 aa).

Active-site residues include arginine 88, glutamate 91, and serine 114.

It belongs to the cyanase family.

The catalysed reaction is cyanate + hydrogencarbonate + 3 H(+) = NH4(+) + 2 CO2. Catalyzes the reaction of cyanate with bicarbonate to produce ammonia and carbon dioxide. The polypeptide is Cyanate hydratase (Cupriavidus necator (strain ATCC 17699 / DSM 428 / KCTC 22496 / NCIMB 10442 / H16 / Stanier 337) (Ralstonia eutropha)).